The chain runs to 463 residues: Quinolone resistance protein NorB (463 aa).

A run of 14 helical transmembrane segments spans residues 17 to 37, 53 to 73, 86 to 106, 107 to 127, 142 to 162, 165 to 185, 201 to 221, 230 to 250, 273 to 293, 299 to 319, 334 to 354, 357 to 377, 403 to 423, and 435 to 455; these read IGIV…VNVV, IAVS…GGLA, IILN…LLLI, IGRL…LSII, YWSI…GAVA, LGWR…LFLI, FDIK…ILIT, SLLF…FIVL, TASN…NTFV, YSSL…LIMI, PMLI…LTFL, IFYV…LGIY, MASA…YAIV, and IALW…LLLV.

This sequence belongs to the major facilitator superfamily. TCR/Tet family.

The protein resides in the cell membrane. Its function is as follows. Multidrug efflux pump that acts independently of NorA and is one of the factors that confers resistance against diverse quinolones and chemical compounds. The chain is Quinolone resistance protein NorB (norB) from Staphylococcus aureus (strain COL).